Consider the following 614-residue polypeptide: Vitamin B12 transporter BtuB (614 aa).

Positions 1-20 (MIKKASLLTACSVTAFSAWA) are cleaved as a signal peptide. A TonB box motif is present at residues 26-33 (DTLVVTAN). The TBDR plug domain maps to 38–152 (PRSTVLAPTT…IGGVVNIITT (115 aa)). Cyanocob(III)alamin is bound by residues Leu83, Ser85, Asn92, and 110-111 (VS). Residues 155–614 (EPGTEISAGW…EYTLSGSYTF (460 aa)) form the TBDR beta-barrel domain. A run of 3 beta stranded transmembrane segments spans residues 158–165 (TEISAGWG), 169–178 (YQNYDVSTQQ), and 184–195 (TRVTLLGDYAHT). Ca(2+)-binding residues include Asp199, Gln211, Asp213, and Asp215. A run of 2 beta stranded transmembrane segments spans residues 217–227 (FLSKTLYGALE) and 232–248 (DAWSGFVRGYGYDNRTN). Residues Tyr249 and Asp250 each coordinate Ca(2+). Cyanocob(III)alamin is bound at residue Ala251. Asp261 is a binding site for Ca(2+). 14 beta stranded membrane-spanning segments follow: residues 263–277 (RKLYSQSWDAGLRYN), 279–296 (ELIKSQLITSYSHSKDYN), 309–325 (TLDEMKQYTVQWANNVI), 328–337 (HGSIGAGVDW), 353–369 (YDQRNTGIYLTGLQQVG), 371–381 (FTFEGAARNDD), 385–400 (FGRHGTWQTSAGWEFI), 403–417 (YRFIASYGTSYKAPN), 434–443 (KSKQWEGAFE), 449–458 (VNWRISGYRN), 473–490 (YYNEGKARIKGVEATANF), 494–509 (PLTHTVSYDYVDARNA), 517–529 (RRAKQQVKYQLDW), and 535–550 (DWGITYQYLGTRYDKD). Thr309 is a cyanocob(III)alamin binding site. Cyanocob(III)alamin is bound at residue Arg517. Residue Tyr551 participates in cyanocob(III)alamin binding. 3 consecutive transmembrane segments (beta stranded) span residues 558–572 (TVKMGGVSLWDLAVA), 585–596 (IANLFDKDYETV), and 602–614 (AGREYTLSGSYTF). Residues 597-614 (YGYQTAGREYTLSGSYTF) carry the TonB C-terminal box motif.

This sequence belongs to the TonB-dependent receptor family. BtuB (TC 1.B.14.3.1) subfamily.

It is found in the cell outer membrane. Functionally, involved in the active translocation of vitamin B12 (cyanocobalamin) across the outer membrane to the periplasmic space. It derives its energy for transport by interacting with the trans-periplasmic membrane protein TonB. In Escherichia coli O139:H28 (strain E24377A / ETEC), this protein is Vitamin B12 transporter BtuB.